Reading from the N-terminus, the 20-residue chain is Lysozyme (20 aa).

As to quaternary structure, monomer.

The protein resides in the secreted. The catalysed reaction is Hydrolysis of (1-&gt;4)-beta-linkages between N-acetylmuramic acid and N-acetyl-D-glucosamine residues in a peptidoglycan and between N-acetyl-D-glucosamine residues in chitodextrins.. Its function is as follows. Has bacteriolytic activity. This Lysobacter sp. (strain XL1) protein is Lysozyme.